A 739-amino-acid chain; its full sequence is MSSISLIQPDRDLFSWPQYWAACFGPAPFLPMSREEMDQLGWDSCDIILVTGDAYVDHPSFGMAICGRMLEAQGFRVGIIAQPDWSSKDDFMRLGKPNLFFGVTAGNMDSMINRYTADRRLRHDDAYTPDNVAGKRPDRATLVYTQRCKEAWKDVPVILGGIEASLRRTAHYDYWSDTVRRSVLVDSKADMLMFGNGERPLVEVAHRLAMGEPISEIRDVRNTAIIVKEALPGWSGVDSTRLDTLGKIDPIPHPYGEDLPCADNKPVAPKKQEAKAVIVQPPRQKPWEKTYVLLPSFEKVKGDKVLYAHASRILHHETNPGCARALMQKHGDRYVWINPPAIPLSTEEMDSVFALPYKRVPHPAYGNARIPAYEMIRFSVNIMRGCFGGCSFCSITEHEGRIIQSRSEDSIINEIEAIRDTVPGFTGVISDLGGPTANMYMLRCKSPRAEQTCRRLSCVYPDICPHMDTNHEPTINLYRRARDLKGIKKILIASGVRYDIAVEDPRYIKELATHHVGGYLKIAPEHTEEGPLSKMMKPGMGSYDRFKELFDTYSKQAGKEQYLIPYFISAHPGTRDEDMVNLALWLKKHRFRLDQVQNFYPSPLANSTTMYYTGKKPLAKIGYKSEGVFVPKGDKQRRLHKALLRYHDPANWPLIRQALEAMGKKHLIGSRRDCLVPAPTIEEMREARRQNRNTRPALTKHTPMATQRQTPATAKKASSTQSRPVNAGAKKRPKAAVGR.

One can recognise a Radical SAM core domain in the interval 372–650; sequence AYEMIRFSVN…KALLRYHDPA (279 aa). [4Fe-4S] cluster is bound by residues cysteine 386, cysteine 390, and cysteine 393. The disordered stretch occupies residues 685-739; that stretch reads REARRQNRNTRPALTKHTPMATQRQTPATAKKASSTQSRPVNAGAKKRPKAAVGR. Residues 704 to 724 are compositionally biased toward polar residues; it reads MATQRQTPATAKKASSTQSRP. Basic residues predominate over residues 729–739; it reads AKKRPKAAVGR.

The protein belongs to the UPF0313 family. [4Fe-4S] cluster serves as cofactor.

The chain is UPF0313 protein YgiQ from Shigella flexneri.